Here is a 428-residue protein sequence, read N- to C-terminus: Glucose-1-phosphate adenylyltransferase (428 aa).

Residues Tyr114, Gly179, 194–195 (EK), and Ser212 contribute to the alpha-D-glucose 1-phosphate site.

Belongs to the bacterial/plant glucose-1-phosphate adenylyltransferase family. Homotetramer.

The enzyme catalyses alpha-D-glucose 1-phosphate + ATP + H(+) = ADP-alpha-D-glucose + diphosphate. Its pathway is glycan biosynthesis; glycogen biosynthesis. Its function is as follows. Involved in the biosynthesis of ADP-glucose, a building block required for the elongation reactions to produce glycogen. Catalyzes the reaction between ATP and alpha-D-glucose 1-phosphate (G1P) to produce pyrophosphate and ADP-Glc. This Yersinia pseudotuberculosis serotype O:1b (strain IP 31758) protein is Glucose-1-phosphate adenylyltransferase.